Consider the following 110-residue polypeptide: UPF0122 protein SMU_1061 (110 aa).

It belongs to the UPF0122 family.

Its function is as follows. Might take part in the signal recognition particle (SRP) pathway. This is inferred from the conservation of its genetic proximity to ftsY/ffh. May be a regulatory protein. The protein is UPF0122 protein SMU_1061 (ylxM) of Streptococcus mutans serotype c (strain ATCC 700610 / UA159).